A 454-amino-acid chain; its full sequence is MKKVLIAGVTSGSGKTTAVLGILKALNEKYTIQSYKVGPDYVDTKFHTRITNRPTRNLDNYLVPDPQVLNYLFTANTENIDLGIIEGVMGLYDGLGTDKDAYSTASIAKQLNIPVILVINARATSTSAAAILKGFIDFDKKVPIKGVIINNVMSENHYKLIAGAIHRYLDLPILGYLPHDSTISLPSRQLGLVPDDELPNVDKKIAKVAEDVKAHVDLQKLLSLATSVSEKVVDPFNIPKTRLRLGIAKDKAFNFYYADNIHLLEKTGIELIPFSPISDNHLPDVDALYFGGGYPEEFASRLAANEFLKKEVYEFSQANKPIYAECGGLMYLGKVLKQGENEFPMVGIFDGMSEMTPRLKRFGYCEAYTQVDCMLGNRGQKIVGHEFHHSMFKQLDQQLKPVLLMKKVRDNQIVDTWSGGYQIRKTFASYLHVHFYQNPKLFIQFLNNLGADVQ.

The region spanning 244-440 is the GATase cobBQ-type domain; sequence RLGIAKDKAF…LHVHFYQNPK (197 aa). Cys326 functions as the Nucleophile in the catalytic mechanism.

Belongs to the CobB/CbiA family. The cofactor is Mg(2+).

The enzyme catalyses cob(II)yrinate + 2 L-glutamine + 2 ATP + 2 H2O = cob(II)yrinate a,c diamide + 2 L-glutamate + 2 ADP + 2 phosphate + 2 H(+). It participates in cofactor biosynthesis; adenosylcobalamin biosynthesis; cob(II)yrinate a,c-diamide from sirohydrochlorin (anaerobic route): step 10/10. Catalyzes the ATP-dependent amidation of the two carboxylate groups at positions a and c of cobyrinate, using either L-glutamine or ammonia as the nitrogen source. The polypeptide is Cobyrinate a,c-diamide synthase (Limosilactobacillus reuteri subsp. reuteri (strain JCM 1112) (Lactobacillus reuteri)).